The chain runs to 736 residues: 1,4-alpha-glucan branching enzyme GlgB (736 aa).

Asp-415 functions as the Nucleophile in the catalytic mechanism. The Proton donor role is filled by Glu-468.

Belongs to the glycosyl hydrolase 13 family. GlgB subfamily. In terms of assembly, monomer.

The catalysed reaction is Transfers a segment of a (1-&gt;4)-alpha-D-glucan chain to a primary hydroxy group in a similar glucan chain.. The protein operates within glycan biosynthesis; glycogen biosynthesis. Catalyzes the formation of the alpha-1,6-glucosidic linkages in glycogen by scission of a 1,4-alpha-linked oligosaccharide from growing alpha-1,4-glucan chains and the subsequent attachment of the oligosaccharide to the alpha-1,6 position. This chain is 1,4-alpha-glucan branching enzyme GlgB, found in Rhodopirellula baltica (strain DSM 10527 / NCIMB 13988 / SH1).